The following is a 970-amino-acid chain: Toxin subunit YenC2 (970 aa).

RHS repeat units follow at residues 168-182 (AGQCVSYYDAAGLIQ), 297-311 (GVVTTYTYEAETQRL), 329-343 (LQDLRYEYDPVGNVL), 361-375 (VPENAYRYDSLYQLV), 408-422 (NYTRTYTYDSAGNLM), 500-514 (DDSESYRYDGSSQRI), 580-594 (NDQIRWSYDNLTCSS), 606-620 (SMEEYYPYGGTAVWA), and 640-654 (DATGLYYYGFRYYQP). The RHS-repeat associated core domain stretch occupies residues 610-690 (YYPYGGTAVW…PLRLTDPDGM (81 aa)). The interval 849 to 950 (TEAFITGIRS…YNCSGIISGL (102 aa)) is deaminase domain.

The protein belongs to the RHS family. Semipurified toxin complex consists of at least YenA1-YenA2-YenB-YenC1-YenC2-Chi1-Chi2. YenB and the N-terminus of YenC2 form a large hollow shell of beta-strands. The shell is closed at both ends, within which the C-terminus of YenC2 is probably found. The C-terminal region dissociates from the YenB-YenC2 complex at pH 4.5 but not 7.5. The Yen-TC:K9 subcomplex is about 26 nm tall and 22 nm in diameter with 5-fold symmetry and 5 copies of YenA1, YenA2, Chi1 and Chi2; the chitinase subunits may be solvent accessible on the exterior the complex. The Yen-TC:K9 subcomplex has no insecticidal activity. The native complex with additional YenB, YenC1 and YenC2 subunits is 16 nm taller and is insecticidal; the toxicity-conferring subunits are present at about 1 copy each.

The protein localises to the secreted. With respect to regulation, toxin complex is secreted when grown at 25 degrees Celsius or less; at higher temperatures the proteins are present intracellularly but not secreted. Part of an orally active toxin complex (TC) with strong insecticidal effects on larvae of the Coleoptera Costelytra zealandica, Acrossidius tasmania and Adoryphorus couloni and some Lepidoptera larvae. The TC has an endochitinase activity. This Yersinia entomophaga protein is Toxin subunit YenC2.